The chain runs to 582 residues: mRNA-decapping enzyme 1A (582 aa).

Residue S62 is modified to Phosphoserine. Residues 132–141 (RSQQAARDKQ) are compositionally biased toward basic and acidic residues. Disordered regions lie at residues 132 to 154 (RSQQAARDKQSPSQANGCSDHRP) and 172 to 214 (QMGD…PSGH). S142, S179, S180, S315, S319, and S334 each carry phosphoserine. Positions 173 to 196 (MGDSNISSPGLQPSTQLSNLGSTE) are enriched in polar residues. Residue T348 is modified to Phosphothreonine. Position 353 is a phosphoserine (S353). At R376 the chain carries Asymmetric dimethylarginine. T401 is subject to Phosphothreonine. A phosphoserine mark is found at S422, S522, S523, and S525. Residues 513-536 (RSSDLERKASSPSPLTIGTPESQR) are disordered. Residues 522-533 (SSPSPLTIGTPE) are compositionally biased toward polar residues. Phosphothreonine is present on residues T528 and T531.

It belongs to the DCP1 family. (Microbial infection) Interacts with rotavirus A non-structural protein 2; this interaction probably plays a role in the sequestration of DCP1A in viral factories. Interacts with rotavirus A non-structural protein 5; this interaction probably plays a role in its sequestration in viral factories. As to quaternary structure, forms a complex with EDC3, DCP2, DDX6 and EDC4/HEDLS, within this complex directly interacts with EDC3. Part of a cytoplasmic complex containing proteins involved in mRNA decay, including XRN1 and LSM1. Interacts with DCP1B. Interacts with DCP2. Interacts with DDX17 in an RNA-independent manner. Interacts with PNRC2. Interacts with SMAD4. Interacts with UPF1. Interacts with ZC3HAV1. Interacts with ZFP36L1. Interacts with NBDY. Interacts with DHX34; the interaction is RNA-independent. As to expression, detected in heart, brain, placenta, lung, skeletal muscle, liver, kidney and pancreas.

Its subcellular location is the cytoplasm. It localises to the P-body. It is found in the nucleus. The catalysed reaction is a 5'-end (N(7)-methyl 5'-triphosphoguanosine)-ribonucleoside in mRNA + H2O = N(7)-methyl-GDP + a 5'-end phospho-ribonucleoside in mRNA + 2 H(+). In terms of biological role, necessary for the degradation of mRNAs, both in normal mRNA turnover and in nonsense-mediated mRNA decay. Removes the 7-methyl guanine cap structure from mRNA molecules, yielding a 5'-phosphorylated mRNA fragment and 7m-GDP. Contributes to the transactivation of target genes after stimulation by TGFB1. Essential for embryonic development. The protein is mRNA-decapping enzyme 1A (DCP1A) of Homo sapiens (Human).